Here is a 463-residue protein sequence, read N- to C-terminus: Fumarate hydratase class II (463 aa).

Substrate is bound by residues 98–100 (SGT), 129–132 (HPND), 139–141 (SSN), and Thr187. His188 serves as the catalytic Proton donor/acceptor. Ser318 is an active-site residue. Substrate is bound by residues Ser319 and 324–326 (KVN).

Belongs to the class-II fumarase/aspartase family. Fumarase subfamily. In terms of assembly, homotetramer.

Its subcellular location is the cytoplasm. It carries out the reaction (S)-malate = fumarate + H2O. It participates in carbohydrate metabolism; tricarboxylic acid cycle; (S)-malate from fumarate: step 1/1. Its function is as follows. Involved in the TCA cycle. Catalyzes the stereospecific interconversion of fumarate to L-malate. The protein is Fumarate hydratase class II of Brucella melitensis biotype 1 (strain ATCC 23456 / CCUG 17765 / NCTC 10094 / 16M).